The primary structure comprises 481 residues: Protein JASON (481 aa).

Residues 226-250 (ECDLDQSNSSNSSENGSSRKPEMGG) are disordered. Positions 232 to 241 (SNSSNSSENG) are enriched in low complexity.

In terms of biological role, required for normal spindle orientation at male meiosis II and normal formation of tetrad of microspores. Acts as a positive regulator of PS1 in male sporogenesis. Not involved in female meiosis. The chain is Protein JASON from Arabidopsis thaliana (Mouse-ear cress).